Reading from the N-terminus, the 109-residue chain is MNSENSKITFKPNILIKGVYIFVLYGMCICIVKNYFKTQLFQLLAPAIHEKSKNNIFMIASDSFPNLYKQNTNYRPAHPLSVASKLPTLLAWLPNRSPLHFQLIWLPIF.

A helical transmembrane segment spans residues 12 to 32 (PNILIKGVYIFVLYGMCICIV).

The protein resides in the membrane. This is an uncharacterized protein from Saccharomyces cerevisiae (strain ATCC 204508 / S288c) (Baker's yeast).